Here is a 473-residue protein sequence, read N- to C-terminus: Aspartyl/glutamyl-tRNA(Asn/Gln) amidotransferase subunit B (473 aa).

This sequence belongs to the GatB/GatE family. GatB subfamily. Heterotrimer of A, B and C subunits.

It catalyses the reaction L-glutamyl-tRNA(Gln) + L-glutamine + ATP + H2O = L-glutaminyl-tRNA(Gln) + L-glutamate + ADP + phosphate + H(+). The enzyme catalyses L-aspartyl-tRNA(Asn) + L-glutamine + ATP + H2O = L-asparaginyl-tRNA(Asn) + L-glutamate + ADP + phosphate + 2 H(+). Allows the formation of correctly charged Asn-tRNA(Asn) or Gln-tRNA(Gln) through the transamidation of misacylated Asp-tRNA(Asn) or Glu-tRNA(Gln) in organisms which lack either or both of asparaginyl-tRNA or glutaminyl-tRNA synthetases. The reaction takes place in the presence of glutamine and ATP through an activated phospho-Asp-tRNA(Asn) or phospho-Glu-tRNA(Gln). This is Aspartyl/glutamyl-tRNA(Asn/Gln) amidotransferase subunit B from Wolbachia sp. subsp. Drosophila simulans (strain wRi).